The following is a 510-amino-acid chain: Secreted RxLR effector protein 108 (510 aa).

An N-terminal signal peptide occupies residues M1–A20. N47 carries an N-linked (GlcNAc...) asparagine glycan. The RxLR-dEER signature appears at R48–R65. Disordered stretches follow at residues R111–T139 and K386–K442. A compositionally biased stretch (basic residues) spans P122–K137. The span at D393–Q405 shows a compositional bias: polar residues. A compositionally biased stretch (basic and acidic residues) spans V429–K442.

It belongs to the RxLR effector family.

It localises to the secreted. It is found in the host nucleus. Its function is as follows. Secreted effector that completely suppresses the host cell death induced by cell death-inducing proteins. The chain is Secreted RxLR effector protein 108 from Plasmopara viticola (Downy mildew of grapevine).